Consider the following 95-residue polypeptide: Protein Vpr (95 aa).

The tract at residues 1–42 (MEQAPEDQGPQREPYNEWALELLEDLKNEALRHFPRPWLHGL) is homooligomerization. A phosphoserine; by host mark is found at Ser79, Ser93, and Ser95.

Belongs to the HIV-1 VPR protein family. As to quaternary structure, homooligomer, may form homodimer. Interacts with p6-gag region of the Pr55 Gag precursor protein through a (Leu-X-X)4 motif near the C-terminus of the P6gag protein. Interacts with host UNG. May interact with host RAD23A/HHR23A. Interacts with host VPRBP/DCAF1, leading to hijack the CUL4A-RBX1-DDB1-DCAF1/VPRBP complex, mediating ubiquitination of host proteins such as TERT and ZGPAT and arrest of the cell cycle in G2 phase. In terms of processing, phosphorylated on several residues by host. These phosphorylations regulate VPR activity for the nuclear import of the HIV-1 pre-integration complex.

It is found in the virion. The protein resides in the host nucleus. The protein localises to the host extracellular space. Its function is as follows. During virus replication, may deplete host UNG protein, and incude G2-M cell cycle arrest. Acts by targeting specific host proteins for degradation by the 26S proteasome, through association with the cellular CUL4A-DDB1 E3 ligase complex by direct interaction with host VPRPB/DCAF-1. Cell cycle arrest reportedly occurs within hours of infection and is not blocked by antiviral agents, suggesting that it is initiated by the VPR carried into the virion. Additionally, VPR induces apoptosis in a cell cycle dependent manner suggesting that these two effects are mechanistically linked. Detected in the serum and cerebrospinal fluid of AIDS patient, VPR may also induce cell death to bystander cells. Functionally, during virus entry, plays a role in the transport of the viral pre-integration (PIC) complex to the host nucleus. This function is crucial for viral infection of non-dividing macrophages. May act directly at the nuclear pore complex, by binding nucleoporins phenylalanine-glycine (FG)-repeat regions. In Pan troglodytes (Chimpanzee), this protein is Protein Vpr.